A 45-amino-acid chain; its full sequence is Large ribosomal subunit protein bL34 (45 aa).

Belongs to the bacterial ribosomal protein bL34 family.

This Salinispora tropica (strain ATCC BAA-916 / DSM 44818 / JCM 13857 / NBRC 105044 / CNB-440) protein is Large ribosomal subunit protein bL34.